A 498-amino-acid chain; its full sequence is Putative antiporter subunit mnhD2 (498 aa).

The next 14 membrane-spanning stretches (helical) occupy residues 2–22 (LSNLLILPMLLPFLCALILVF), 32–52 (YLYLGTMTITTIISLMLLIYV), 78–98 (LSLIMVTTASFVITLIMAYGF), 108–128 (YHLPSFILFLSVGVIGSFLTS), 130–150 (LFNLYVMFEIMLLASFVLITL), 161–181 (IIYVVLNIIGSWLFLLGIGLL), 209–229 (ISLIFLVAFSAKAALVLFMWL), 240–260 (LAALFAALMTKVGAYALIRFF), 271–291 (IHPLLATMAAITMVIGAIGVI), 308–328 (IGFIILGLGTNTFAGINGAIF), 330–350 (LVNDIVVKTLLFFIIGSLVYI), 369–389 (FGVAFIIMIFAIGGVPPFSGF), 403–423 (GNYIGLALMIITSLIAMYSLF), and 451–471 (ILSILVVVVIAIGIAAPVVLN).

It belongs to the CPA3 antiporters (TC 2.A.63) subunit D family. As to quaternary structure, may form a heterooligomeric complex that consists of seven subunits: mnhA2, mnhB2, mnhC2, mnhD2, mnhE2, mnhF2 and mnhG2.

It localises to the cell membrane. The sequence is that of Putative antiporter subunit mnhD2 (mnhD2) from Staphylococcus aureus (strain JH1).